Consider the following 1096-residue polypeptide: Protein transport protein SEC24 B (1096 aa).

Residues 1–315 (MAAPVPPGAY…SAPGTPGSIY (315 aa)) are disordered. A compositionally biased stretch (low complexity) spans 12–23 (PNNNQQNSGGPP). Polar residues predominate over residues 27-45 (PGSQGNPNSLAANMQNLNI). Residues 47–64 (RPPPPMPGSGPRPSPPFG) show a composition bias toward pro residues. The span at 65 to 78 (QSPQSFPQQQQQQP) shows a compositional bias: low complexity. Residues 79 to 92 (RPSPMARPGPPPPA) are compositionally biased toward pro residues. The segment covering 93 to 107 (AMARPGGPPQVSQPG) has biased composition (low complexity). The segment covering 108-122 (GFPPVGRPVAPPSNQ) has biased composition (pro residues). The segment covering 140-149 (SFPQPGGFPA) has biased composition (low complexity). 4 stretches are compositionally biased toward pro residues: residues 150 to 160 (SGPPGGVPSGP), 171 to 186 (SPPP…PPSG), 246 to 258 (MAPP…PPNA), and 287 to 303 (GRPP…PPQQ). Cysteine 433, cysteine 436, cysteine 455, and cysteine 458 together coordinate Zn(2+). The segment at 433-458 (CSRCKGYVNPFMKFIDQGRKFICNLC) is zinc finger-like.

It belongs to the SEC23/SEC24 family. SEC24 subfamily. In terms of assembly, component of the coat protein complex II (COPII), composed of at least five proteins: the Sec23/24 complex, the Sec13/31 complex and Sar1. As to expression, mainly expressed in pollen, roots, stems, petioles and hypocotyls, and, to a lower extent, in leaves and cotyledons.

It is found in the cytoplasmic vesicle. The protein localises to the COPII-coated vesicle membrane. The protein resides in the endoplasmic reticulum membrane. It localises to the golgi apparatus membrane. Functionally, component of the coat protein complex II (COPII), that covers ER-derived vesicles involved in transport from the endoplasmic reticulum to the Golgi apparatus. COPII is composed of at least five proteins: the SEC23/24 complex, the SEC13/31 complex, and the protein SAR1. Acts in the cytoplasm to promote the transport of secretory, plasma membrane, and vacuolar proteins from the endoplasmic reticulum to the Golgi complex. The sequence is that of Protein transport protein SEC24 B from Arabidopsis thaliana (Mouse-ear cress).